The following is a 203-amino-acid chain: Probable metallo-hydrolase MJ0296 (203 aa).

Zn(2+) is bound by residues H86, H88, D90, H91, H135, D152, and H193.

Belongs to the metallo-beta-lactamase superfamily. It depends on Zn(2+) as a cofactor.

The protein is Probable metallo-hydrolase MJ0296 of Methanocaldococcus jannaschii (strain ATCC 43067 / DSM 2661 / JAL-1 / JCM 10045 / NBRC 100440) (Methanococcus jannaschii).